Reading from the N-terminus, the 443-residue chain is UDP-N-acetylmuramate--L-alanine ligase (443 aa).

Position 110-116 (110-116) interacts with ATP; the sequence is GAHGKTS.

The protein belongs to the MurCDEF family.

The protein resides in the cytoplasm. It carries out the reaction UDP-N-acetyl-alpha-D-muramate + L-alanine + ATP = UDP-N-acetyl-alpha-D-muramoyl-L-alanine + ADP + phosphate + H(+). It participates in cell wall biogenesis; peptidoglycan biosynthesis. In terms of biological role, cell wall formation. This is UDP-N-acetylmuramate--L-alanine ligase from Lactococcus lactis subsp. cremoris (strain MG1363).